We begin with the raw amino-acid sequence, 937 residues long: Protocadherin alpha-7 (937 aa).

The signal sequence occupies residues methionine 1–glycine 29. Cadherin domains lie at glutamine 30–phenylalanine 133, proline 134–phenylalanine 242, aspartate 243–leucine 350, threonine 351–phenylalanine 455, alanine 456–leucine 565, and valine 581–alanine 678. Topologically, residues glutamine 30–asparagine 697 are extracellular. An intrachain disulfide couples cysteine 96 to cysteine 102. N-linked (GlcNAc...) asparagine glycosylation is found at asparagine 254 and asparagine 265. An N-linked (GlcNAc...) asparagine glycan is attached at asparagine 548. A helical membrane pass occupies residues valine 698–tyrosine 718. At threonine 719–glutamine 937 the chain is on the cytoplasmic side. Disordered stretches follow at residues arginine 755–tyrosine 795 and isoleucine 814–glutamine 937. 5 PXXP repeats span residues proline 774 to proline 777, proline 786 to proline 789, proline 819 to proline 822, proline 860 to proline 863, and proline 878 to proline 881. The tract at residues proline 774–proline 881 is 5 X 4 AA repeats of P-X-X-P. The span at serine 775–arginine 787 shows a compositional bias: polar residues. The span at aspartate 896–lysine 910 shows a compositional bias: basic and acidic residues.

As to quaternary structure, forms homodimers in trans (molecules expressed by two different cells). Forms promiscuous heterodimers in cis (at the plasma membrane of the same cell) with other protocadherins.

Its subcellular location is the cell membrane. In terms of biological role, calcium-dependent cell-adhesion protein involved in cells self-recognition and non-self discrimination. Thereby, it is involved in the establishment and maintenance of specific neuronal connections in the brain. This chain is Protocadherin alpha-7, found in Homo sapiens (Human).